Consider the following 100-residue polypeptide: Small ribosomal subunit protein uS14c (100 aa).

Belongs to the universal ribosomal protein uS14 family. As to quaternary structure, part of the 30S ribosomal subunit.

The protein localises to the plastid. It is found in the chloroplast. Functionally, binds 16S rRNA, required for the assembly of 30S particles. This chain is Small ribosomal subunit protein uS14c, found in Cyanidium caldarium (Red alga).